The sequence spans 91 residues: Small ribosomal subunit protein uS17 (91 aa).

This sequence belongs to the universal ribosomal protein uS17 family. As to quaternary structure, part of the 30S ribosomal subunit.

One of the primary rRNA binding proteins, it binds specifically to the 5'-end of 16S ribosomal RNA. The protein is Small ribosomal subunit protein uS17 of Salinispora arenicola (strain CNS-205).